Consider the following 46-residue polypeptide: uncharacterized protein (46 aa).

The helical transmembrane segment at 12–34 threads the bilayer; sequence HFNHFVIALSFIYGLTELGYLLL.

The protein localises to the cell membrane. This is an uncharacterized protein from Bacillus subtilis (strain 168).